Consider the following 221-residue polypeptide: Probable septum site-determining protein MinC (221 aa).

It belongs to the MinC family. As to quaternary structure, interacts with MinD and FtsZ.

In terms of biological role, cell division inhibitor that blocks the formation of polar Z ring septums. Rapidly oscillates between the poles of the cell to destabilize FtsZ filaments that have formed before they mature into polar Z rings. Prevents FtsZ polymerization. This is Probable septum site-determining protein MinC from Prochlorococcus marinus (strain SARG / CCMP1375 / SS120).